The primary structure comprises 315 residues: Deoxyhypusine hydroxylase (315 aa).

6 HEAT-like PBS-type repeats span residues Ile23–Lys52, Leu56–Asn82, Val89–Asp115, Asn179–Asp205, Leu211–Asp237, and Val244–Asp270. Residues His58, His91, and Glu92 each coordinate Fe cation. His213, His246, and Glu247 together coordinate Fe cation.

It belongs to the deoxyhypusine hydroxylase family. The cofactor is Fe(2+).

The enzyme catalyses [eIF5A protein]-deoxyhypusine + AH2 + O2 = [eIF5A protein]-hypusine + A + H2O. Its pathway is protein modification; eIF5A hypusination. Its function is as follows. Catalyzes the hydroxylation of the N(6)-(4-aminobutyl)-L-lysine intermediate produced by deoxyhypusine synthase/DHPS on a critical lysine of the eukaryotic translation initiation factor 5A/eIF-5A. This is the second step of the post-translational modification of that lysine into an unusual amino acid residue named hypusine. Hypusination is unique to mature eIF-5A factor and is essential for its function. In Dictyostelium discoideum (Social amoeba), this protein is Deoxyhypusine hydroxylase (dohh-1).